We begin with the raw amino-acid sequence, 225 residues long: NAD(P)H-quinone oxidoreductase subunit K, chloroplastic (225 aa).

4 residues coordinate [4Fe-4S] cluster: Cys43, Cys44, Cys108, and Cys139.

Belongs to the complex I 20 kDa subunit family. In terms of assembly, NDH is composed of at least 16 different subunits, 5 of which are encoded in the nucleus. [4Fe-4S] cluster is required as a cofactor.

It is found in the plastid. The protein localises to the chloroplast thylakoid membrane. It carries out the reaction a plastoquinone + NADH + (n+1) H(+)(in) = a plastoquinol + NAD(+) + n H(+)(out). The enzyme catalyses a plastoquinone + NADPH + (n+1) H(+)(in) = a plastoquinol + NADP(+) + n H(+)(out). In terms of biological role, NDH shuttles electrons from NAD(P)H:plastoquinone, via FMN and iron-sulfur (Fe-S) centers, to quinones in the photosynthetic chain and possibly in a chloroplast respiratory chain. The immediate electron acceptor for the enzyme in this species is believed to be plastoquinone. Couples the redox reaction to proton translocation, and thus conserves the redox energy in a proton gradient. This Brachypodium distachyon (Purple false brome) protein is NAD(P)H-quinone oxidoreductase subunit K, chloroplastic.